We begin with the raw amino-acid sequence, 225 residues long: Biosynthetic peptidoglycan transglycosylase (225 aa).

A helical transmembrane segment spans residues valine 8–valine 28.

Belongs to the glycosyltransferase 51 family.

It is found in the cell inner membrane. It carries out the reaction [GlcNAc-(1-&gt;4)-Mur2Ac(oyl-L-Ala-gamma-D-Glu-L-Lys-D-Ala-D-Ala)](n)-di-trans,octa-cis-undecaprenyl diphosphate + beta-D-GlcNAc-(1-&gt;4)-Mur2Ac(oyl-L-Ala-gamma-D-Glu-L-Lys-D-Ala-D-Ala)-di-trans,octa-cis-undecaprenyl diphosphate = [GlcNAc-(1-&gt;4)-Mur2Ac(oyl-L-Ala-gamma-D-Glu-L-Lys-D-Ala-D-Ala)](n+1)-di-trans,octa-cis-undecaprenyl diphosphate + di-trans,octa-cis-undecaprenyl diphosphate + H(+). It functions in the pathway cell wall biogenesis; peptidoglycan biosynthesis. In terms of biological role, peptidoglycan polymerase that catalyzes glycan chain elongation from lipid-linked precursors. This Acinetobacter baumannii (strain ACICU) protein is Biosynthetic peptidoglycan transglycosylase.